Reading from the N-terminus, the 269-residue chain is Putative pyruvate, phosphate dikinase regulatory protein (269 aa).

Residue 151-158 (GVSRSSKT) participates in ADP binding.

This sequence belongs to the pyruvate, phosphate/water dikinase regulatory protein family. PDRP subfamily.

The catalysed reaction is N(tele)-phospho-L-histidyl/L-threonyl-[pyruvate, phosphate dikinase] + ADP = N(tele)-phospho-L-histidyl/O-phospho-L-threonyl-[pyruvate, phosphate dikinase] + AMP + H(+). It carries out the reaction N(tele)-phospho-L-histidyl/O-phospho-L-threonyl-[pyruvate, phosphate dikinase] + phosphate + H(+) = N(tele)-phospho-L-histidyl/L-threonyl-[pyruvate, phosphate dikinase] + diphosphate. In terms of biological role, bifunctional serine/threonine kinase and phosphorylase involved in the regulation of the pyruvate, phosphate dikinase (PPDK) by catalyzing its phosphorylation/dephosphorylation. The chain is Putative pyruvate, phosphate dikinase regulatory protein from Geobacter metallireducens (strain ATCC 53774 / DSM 7210 / GS-15).